Consider the following 292-residue polypeptide: Sulfofructosephosphate aldolase (292 aa).

Lysine 193 (schiff-base intermediate with substrate) is an active-site residue.

The protein belongs to the aldolase LacD family. In terms of assembly, homotetramer.

The catalysed reaction is 6-deoxy-6-sulfo-D-fructose 1-phosphate = (2S)-3-sulfolactaldehyde + dihydroxyacetone phosphate. Cleaves 6-deoxy-6-sulfo-D-fructose 1-phosphate (SFP) to form dihydroxyacetone phosphate (DHAP) and 3-sulfolactaldehyde (SLA). The chain is Sulfofructosephosphate aldolase (yihT) from Escherichia coli O157:H7.